We begin with the raw amino-acid sequence, 562 residues long: Eukaryotic translation initiation factor 3 subunit L (562 aa).

The disordered stretch occupies residues 1–29 (MSHAKEDYDSSYDPYSYQADYDGHTGDPK). Over residues 11–20 (SYDPYSYQAD) the composition is skewed to low complexity. The 207-residue stretch at 329–535 (DSIRVFANIL…IHIADTKVAR (207 aa)) folds into the PCI domain.

It belongs to the eIF-3 subunit L family. As to quaternary structure, component of the eukaryotic translation initiation factor 3 (eIF-3) complex, which is composed of 13 subunits: eif3a, eif3b, eif3c, eif3d, eif3e, eif3f, eif3g, eif3h, eif3i, eif3j, eif3k, eif3l and eif3m.

The protein localises to the cytoplasm. Functionally, component of the eukaryotic translation initiation factor 3 (eIF-3) complex, which is involved in protein synthesis of a specialized repertoire of mRNAs and, together with other initiation factors, stimulates binding of mRNA and methionyl-tRNAi to the 40S ribosome. The eIF-3 complex specifically targets and initiates translation of a subset of mRNAs involved in cell proliferation. The sequence is that of Eukaryotic translation initiation factor 3 subunit L (eif3l) from Xenopus laevis (African clawed frog).